The chain runs to 81 residues: MVNKQQNNLQDIFLNNARKNKIQIIIHLVNGFQLKGTVKGFDNFTVILDCDNKQMLIYKHAISTITPTKPILFADNEYETT.

Positions 11 to 71 constitute a Sm domain; that stretch reads DIFLNNARKN…ISTITPTKPI (61 aa).

It belongs to the Hfq family. As to quaternary structure, homohexamer.

RNA chaperone that binds small regulatory RNA (sRNAs) and mRNAs to facilitate mRNA translational regulation in response to envelope stress, environmental stress and changes in metabolite concentrations. Also binds with high specificity to tRNAs. The protein is RNA-binding protein Hfq of Clostridium beijerinckii (strain ATCC 51743 / NCIMB 8052) (Clostridium acetobutylicum).